Reading from the N-terminus, the 192-residue chain is UPF0301 protein Bamb_0737 (192 aa).

Belongs to the UPF0301 (AlgH) family.

The protein is UPF0301 protein Bamb_0737 of Burkholderia ambifaria (strain ATCC BAA-244 / DSM 16087 / CCUG 44356 / LMG 19182 / AMMD) (Burkholderia cepacia (strain AMMD)).